The primary structure comprises 352 residues: Holliday junction branch migration complex subunit RuvB (352 aa).

The tract at residues 4–191 is large ATPase domain (RuvB-L); it reads TDKFSAPDRV…FGIVARLEFY (188 aa). Residues Leu-30, Arg-31, Gly-72, Lys-75, Thr-76, Thr-77, 138 to 140, Arg-181, Tyr-191, and Arg-228 each bind ATP; that span reads EDY. Thr-76 provides a ligand contact to Mg(2+). Residues 192-262 are small ATPAse domain (RuvB-S); it reads TAEELARIVT…IADAALAMLD (71 aa). Residues 265–352 are head domain (RuvB-H); the sequence is RVGFDLMDRK…GDSGDLIDGE (88 aa). Arg-301, Arg-320, and Arg-325 together coordinate DNA.

It belongs to the RuvB family. Homohexamer. Forms an RuvA(8)-RuvB(12)-Holliday junction (HJ) complex. HJ DNA is sandwiched between 2 RuvA tetramers; dsDNA enters through RuvA and exits via RuvB. An RuvB hexamer assembles on each DNA strand where it exits the tetramer. Each RuvB hexamer is contacted by two RuvA subunits (via domain III) on 2 adjacent RuvB subunits; this complex drives branch migration. In the full resolvosome a probable DNA-RuvA(4)-RuvB(12)-RuvC(2) complex forms which resolves the HJ.

The protein resides in the cytoplasm. The enzyme catalyses ATP + H2O = ADP + phosphate + H(+). Its function is as follows. The RuvA-RuvB-RuvC complex processes Holliday junction (HJ) DNA during genetic recombination and DNA repair, while the RuvA-RuvB complex plays an important role in the rescue of blocked DNA replication forks via replication fork reversal (RFR). RuvA specifically binds to HJ cruciform DNA, conferring on it an open structure. The RuvB hexamer acts as an ATP-dependent pump, pulling dsDNA into and through the RuvAB complex. RuvB forms 2 homohexamers on either side of HJ DNA bound by 1 or 2 RuvA tetramers; 4 subunits per hexamer contact DNA at a time. Coordinated motions by a converter formed by DNA-disengaged RuvB subunits stimulates ATP hydrolysis and nucleotide exchange. Immobilization of the converter enables RuvB to convert the ATP-contained energy into a lever motion, pulling 2 nucleotides of DNA out of the RuvA tetramer per ATP hydrolyzed, thus driving DNA branch migration. The RuvB motors rotate together with the DNA substrate, which together with the progressing nucleotide cycle form the mechanistic basis for DNA recombination by continuous HJ branch migration. Branch migration allows RuvC to scan DNA until it finds its consensus sequence, where it cleaves and resolves cruciform DNA. This Cupriavidus pinatubonensis (strain JMP 134 / LMG 1197) (Cupriavidus necator (strain JMP 134)) protein is Holliday junction branch migration complex subunit RuvB.